The chain runs to 434 residues: Tol-Pal system protein TolB (434 aa).

Residues 1–21 (MTVRRALALAALALAVSPALA) form the signal peptide. Residues 411-434 (GDRQTPVTSGKTDLAAPAWGPLAP) form a disordered region.

It belongs to the TolB family. In terms of assembly, the Tol-Pal system is composed of five core proteins: the inner membrane proteins TolA, TolQ and TolR, the periplasmic protein TolB and the outer membrane protein Pal. They form a network linking the inner and outer membranes and the peptidoglycan layer.

It localises to the periplasm. Part of the Tol-Pal system, which plays a role in outer membrane invagination during cell division and is important for maintaining outer membrane integrity. This is Tol-Pal system protein TolB from Anaeromyxobacter dehalogenans (strain 2CP-1 / ATCC BAA-258).